The sequence spans 96 residues: Maintenance of carboxysome distribution protein B (96 aa).

Positions 1-18 are enriched in basic and acidic residues; sequence MTNLEDKLSASIKTENKD. Residues 1–96 are disordered; the sequence is MTNLEDKLSA…STHPRRVWPD (96 aa). Low complexity predominate over residues 59-74; it reads ARATTTKPAVSKSSKP.

In terms of assembly, monomer, associates with McdA:DNA. Interacts with shell components of the carboxysome.

The protein localises to the carboxysome. In terms of biological role, mcdA and McdB together mediate carboxysome positioning on the nucleoid and to prevent their aggregation in the cell. Undergoes liquid-liquid phase separation at pH 7.0 in the presence of crowders polyethylene glycol or Ficoll. McdA is an ATPase that forms dynamic gradients on the nucleoid in response to adapter protein McdB, which associates with carboxysomes. The interplay between McdA gradients on the nucleoid and McdB-bound carboxysomes result in the equal spacing of Cbs along the cell length. Stimulates the ATPase activity of McdA, causing McdA to be released from DNA. Incorrect positioning (aggregation) of carboxysomes results in reduced CO(2) fixation by encapsulated form 1 ribulose-1,5-bisphosphate carboxylase (RuBisCO, cbbL/cbbS), which leads to slower growth. This chain is Maintenance of carboxysome distribution protein B, found in Halothiobacillus neapolitanus (strain ATCC 23641 / c2) (Thiobacillus neapolitanus).